The following is a 380-amino-acid chain: Cytochrome b (380 aa).

A run of 4 helical transmembrane segments spans residues 33–53, 77–98, 113–133, and 178–198; these read SGSL…FLAM, WLIR…YLHV, WNIG…GYVL, and FFAF…IHLL. H83 and H97 together coordinate heme b. Residues H182 and H196 each coordinate heme b. H201 contacts a ubiquinone. 4 helical membrane-spanning segments follow: residues 226–246, 288–308, 320–340, and 347–367; these read YKDL…ALFS, LGGV…PILH, LSQI…WIGG, and FVLI…IALP.

The protein belongs to the cytochrome b family. In terms of assembly, the cytochrome bc1 complex contains 3 respiratory subunits (MT-CYB, CYC1 and UQCRFS1), 2 core proteins (UQCRC1 and UQCRC2) and probably 6 low-molecular weight proteins. It depends on heme b as a cofactor.

Its subcellular location is the mitochondrion inner membrane. In terms of biological role, component of the ubiquinol-cytochrome c reductase complex (complex III or cytochrome b-c1 complex) that is part of the mitochondrial respiratory chain. The b-c1 complex mediates electron transfer from ubiquinol to cytochrome c. Contributes to the generation of a proton gradient across the mitochondrial membrane that is then used for ATP synthesis. The protein is Cytochrome b (mt-cyb) of Polyodon spathula (North American paddlefish).